The sequence spans 1489 residues: Sex-determining transformer protein 2 (1489 aa).

An N-terminal signal peptide occupies residues 1–33; that stretch reads MKLAFNKLLVASVVFTVLSFGLLLASLFTTTAT. Helical transmembrane passes span 454–474, 489–509, 513–533, 600–620, 622–642, 749–769, 931–951, 958–978, 986–1006, 1041–1061, and 1066–1086; these read MIYF…AFAF, GFIT…ILID, LCYI…VTFI, YWFL…FFID, DVQK…FEEM, AVVV…LLFI, IFAA…FSIG, LAFA…VSLF, YTNV…CDLA, VQIF…TAII, and AFFI…FNSL. The tract at residues 1138 to 1288 is interaction with fem-3; the sequence is EFSIRPTENT…EQQEVTDDVA (151 aa). 3 disordered regions span residues 1143-1176, 1233-1393, and 1412-1489; these read PTEN…DPSM, LLRQ…YPPS, and RNLP…TPGL. 3 stretches are compositionally biased toward basic and acidic residues: residues 1275–1298, 1326–1340, and 1423–1433; these read DPAK…EVRK, VSRE…REPR, and RPRDWDQRRLV. The tract at residues 1402–1423 is MX regulatory domain; required for tra-1 binding; sequence CEDVYWKYNERNLPDNVPMPPR. Residues 1444-1456 are compositionally biased toward pro residues; the sequence is VPPPGRSAIPIPP. Over residues 1460–1482 the composition is skewed to basic and acidic residues; sequence RLRERRREQHLREQEARRNRPES.

Interacts with tra-1 and fem-3.

Its subcellular location is the membrane. In terms of biological role, plays a major role in controlling sexual cell fates. Promotes female development in XX animals where it sequesters one or more of the FEM proteins to the membrane thereby freeing the tra-1 protein (a putative transcription factor) to enter the nucleus and promote female development. In XO animals it acts as a receptor for her-1 which prevents it from binding to FEM proteins thereby repressing the activity of tra-1. Negatively regulates male development when bound to fem-3 and is required together with tra-1 for promoting spermatogenesis. Also required for feminizing tra-3 activity. This Caenorhabditis briggsae protein is Sex-determining transformer protein 2.